Here is a 238-residue protein sequence, read N- to C-terminus: Ribosomal RNA small subunit methyltransferase G (238 aa).

S-adenosyl-L-methionine is bound by residues glycine 77, phenylalanine 82, 128–129 (AE), and arginine 146. A disordered region spans residues 216 to 238 (KKRQTPKKYPRKPGTPNKEPLLK).

The protein belongs to the methyltransferase superfamily. RNA methyltransferase RsmG family.

Its subcellular location is the cytoplasm. In terms of biological role, specifically methylates the N7 position of guanine in position 535 of 16S rRNA. This is Ribosomal RNA small subunit methyltransferase G from Macrococcus caseolyticus (strain JCSC5402) (Macrococcoides caseolyticum).